The chain runs to 283 residues: Phytanoyl-CoA dioxygenase (283 aa).

2-oxoglutarate is bound by residues lysine 99, methionine 138, 153 to 155 (HQD), and tryptophan 170. Residues histidine 153 and aspartate 155 each contribute to the Fe cation site. Histidine 238 serves as a coordination point for Fe cation. The 2-oxoglutarate site is built by serine 240 and arginine 249.

It belongs to the PhyH family. Requires Fe cation as cofactor. L-ascorbate serves as cofactor.

The enzyme catalyses phytanoyl-CoA + 2-oxoglutarate + O2 = 2-hydroxyphytanoyl-CoA + succinate + CO2. It functions in the pathway lipid metabolism; fatty acid metabolism. Converts phytanoyl-CoA to 2-hydroxyphytanoyl-CoA. In Arabidopsis thaliana (Mouse-ear cress), this protein is Phytanoyl-CoA dioxygenase.